Consider the following 2444-residue polypeptide: Protein SON (2444 aa).

A2 is modified (N-acetylalanine). K16 carries the N6-acetyllysine modification. Positions 23 to 37 are enriched in polar residues; sequence ELSSGRSEGQLNGET. Residues 23–58 form a disordered region; that stretch reads ELSSGRSEGQLNGETNPPIEGNQAGDTAASARSLPN. A Glycyl lysine isopeptide (Lys-Gly) (interchain with G-Cter in SUMO2) cross-link involves residue K64. Residues 79–88 are compositionally biased toward basic and acidic residues; sequence YKPDLKEASR. Residues 79-155 form a disordered region; that stretch reads YKPDLKEASR…GNLESDSFLK (77 aa). S94 carries the phosphoserine modification. Positions 106–130 are enriched in basic residues; sequence KKSKKHKKHKNKKKKKKKEKEKKYK. The segment covering 131–155 has biased composition (basic and acidic residues); sequence RQPEESESKLKSHHDGNLESDSFLK. 4 positions are modified to phosphoserine: S142, S150, S152, and S158. Residue K284 is modified to N6-acetyllysine. Disordered stretches follow at residues 301–358 and 391–468; these read TLTI…ESLE and GPPV…PEPP. Composition is skewed to pro residues over residues 393-406 and 420-439; these read PVTP…PSAT and PELP…PSVT. T395 is subject to Phosphothreonine. Positions 721–850 are 13 X 10 AA tandem repeats of L-A-[ST]-[NSG]-[TS]-MDSQM; the sequence is LASNTMDSQM…LATSSMDSQM (130 aa). The 11 X 7 AA tandem repeats of [DR]-P-Y-R-[LI][AG][QHP] stretch occupies residues 907–983; sequence DPYRLAQDPY…IAPRPYRLAP (77 aa). R945 is modified (omega-N-methylarginine). The residue at position 954 (T954) is a Phosphothreonine. Position 993 is a phosphoserine (S993). 14 consecutive repeat copies span residues 1001 to 1006, 1009 to 1014, 1016 to 1021, 1025 to 1030, 1033 to 1038, 1041 to 1046, 1050 to 1055, 1058 to 1063, 1066 to 1071, 1075 to 1080, 1084 to 1089, 1095 to 1100, 1106 to 1111, and 1115 to 1120. The tract at residues 1001–1120 is 14 X 6 AA repeats of [ED]-R-S-M-M-S; sequence ERSMMSSYER…SSYTDRSMMS (120 aa). The residue at position 1002 (R1002) is an Asymmetric dimethylarginine. Asymmetric dimethylarginine is present on R1017. Phosphoserine occurs at positions 1030 and 1038. Residues S1055 and S1063 each carry the phosphoserine modification. S1077 bears the Phosphoserine mark. The span at 1141–1168 shows a compositional bias: pro residues; that stretch reads PPLPPEEPPTMPPLPPEEPPMTPPLPPE. The tract at residues 1141–1173 is 3 X 11 AA tandem repats of P-P-L-P-P-E-E-P-P-[TME]-[MTG]; the sequence is PPLPPEEPPTMPPLPPEEPPMTPPLPPEEPPEG. Positions 1141–1213 are disordered; the sequence is PPLPPEEPPT…PEPPVSQSEI (73 aa). The span at 1177-1213 shows a compositional bias: polar residues; the sequence is STEQSALTADNTWSTEVTLSTGESLSQPEPPVSQSEI. Phosphoserine is present on residues S1678, S1723, S1727, S1772, S1784, S1791, S1794, S1807, and S1808. A disordered region spans residues 1802–2072; that stretch reads ERASESSSEE…RSPKRLTDLD (271 aa). Basic and acidic residues-rich tracts occupy residues 1815–1826, 1834–1847, and 1855–1870; these read YEIFVKVKDTHE, RDKG…DSSL, and KSSE…ESRS. Basic residues-rich tracts occupy residues 1871–1934 and 1942–1973; these read RARK…RKRS and AARA…RRRS. 7 consecutive repeat copies span residues 1950 to 1956, 1959 to 1977, 1978 to 1984, 1985 to 1991, 1992 to 1998, 1999 to 2005, and 2006 to 2012. Residues 1950–2019 are 7 X 7 AA repeats of P-S-R-R-S-R-[TS]; that stretch reads PSRRSRSHTP…SRTPSRRRRS (70 aa). The interval 1959–2030 is 2 X 19 AA repeats of P-S-R-R-R-R-S-R-S-V-V-R-R-R-S-F-S-I-S; that stretch reads PSRRRRSRSV…SAVRRRSFSI (72 aa). Residues S1973, S1975, and S1977 each carry the phosphoserine modification. The span at 1980–2027 shows a compositional bias: basic residues; it reads RRSRTPSRRSRTPSRRSRTPSRRSRTPSRRSRTPSRRRRSRSAVRRRS. Residues 2013-2019 form a 2-7; approximate repeat; the sequence is PSRRRRS. A 3-2; approximate repeat occupies 2020 to 2030; it reads RSAVRRRSFSI. S2027, S2029, S2031, S2047, and S2049 each carry phosphoserine. The tract at residues 2031–2057 is 3 X tandem repeats of [ST]-P-[VLI]-R-[RL]-[RK]-[RF]-S-R; that stretch reads SPVRLRRSRTPLRRRFSRSPIRRKRSR. The segment covering 2034-2056 has biased composition (basic residues); the sequence is RLRRSRTPLRRRFSRSPIRRKRS. Basic and acidic residues predominate over residues 2057–2072; sequence RSSERGRSPKRLTDLD. Position 2073 is an N6-acetyllysine; alternate (K2073). K2073 participates in a covalent cross-link: Glycyl lysine isopeptide (Lys-Gly) (interchain with G-Cter in SUMO2); alternate. K2110 participates in a covalent cross-link: Glycyl lysine isopeptide (Lys-Gly) (interchain with G-Cter in SUMO2). S2147 is modified (phosphoserine). K2167 participates in a covalent cross-link: Glycyl lysine isopeptide (Lys-Gly) (interchain with G-Cter in SUMO2). T2181 is modified (phosphothreonine). Residues 2192 to 2238 are disordered; it reads EFPVSSGSQHRKKEADSVYGEWVPVEKNGEESKDDDNVFSSSLPSEP. Position 2256 is a phosphoserine (S2256). The 47-residue stretch at 2323-2369 folds into the G-patch domain; the sequence is TGGMGAVLMRKMGWREGEGLGKNKEGNKEPILVDFKTDRKGLVAVGE. One can recognise a DRBM domain in the interval 2389–2444; sequence HPVSALMEICNKRRWQPPEFLLVHDSGPDHRKHFLFRVLRNGSPYQPNCMFFLNRY.

As to quaternary structure, interacts with SRSF2. Associates with the spliceosome. Interacts with USH1G. Widely expressed. Highly expressed in brain, heart, spleen, liver, skeletal muscle, kidney and testis.

The protein localises to the nucleus speckle. In terms of biological role, RNA-binding protein that acts as a mRNA splicing cofactor by promoting efficient splicing of transcripts that possess weak splice sites. Specifically promotes splicing of many cell-cycle and DNA-repair transcripts that possess weak splice sites, such as TUBG1, KATNB1, TUBGCP2, AURKB, PCNT, AKT1, RAD23A, and FANCG. Probably acts by facilitating the interaction between Serine/arginine-rich proteins such as SRSF2 and the RNA polymerase II. Also binds to DNA; binds to the consensus DNA sequence: 5'-GA[GT]AN[CG][AG]CC-3'. Essential for correct RNA splicing of multiple genes critical for brain development, neuronal migration and metabolism, including TUBG1, FLNA, PNKP, WDR62, PSMD3, PCK2, PFKL, IDH2, and ACY1. May also regulate the ghrelin signaling in hypothalamic neuron by acting as a negative regulator of GHSR expression. The sequence is that of Protein SON (Son) from Mus musculus (Mouse).